The sequence spans 182 residues: Ribosome-recycling factor (182 aa).

Positions 136 to 156 (IRKQEKNSDISKDESRDLQDK) are disordered.

Belongs to the RRF family.

Its subcellular location is the cytoplasm. In terms of biological role, responsible for the release of ribosomes from messenger RNA at the termination of protein biosynthesis. May increase the efficiency of translation by recycling ribosomes from one round of translation to another. The chain is Ribosome-recycling factor from Trichodesmium erythraeum (strain IMS101).